A 484-amino-acid polypeptide reads, in one-letter code: Coronin-1B (484 aa).

Ser-2 carries the post-translational modification Phosphoserine. WD repeat units follow at residues 80–120 (GHTG…LTSP), 130–170 (GHTK…ELYR), 174–213 (LHPDLIYNVSWNHNGSLFCTACKDKSVRIIDPRRGTLVAE), 217–260 (AHEG…EPMA), and 265–305 (DSSN…PYIH). A coiled-coil region spans residues 447–481 (KLEEVMHGLRALRVLVKEQGERISRLEEHLGRMEN).

The protein belongs to the WD repeat coronin family. As to quaternary structure, forms homooligomers, but does not form complexes with the other coronins. Interacts with Arp2/3 complex components, including ACTR2, ARPC1B and ARPC2. Binds actin. In terms of processing, phosphorylation on Ser-2 regulates the interaction with the Arp2/3 complex and cell motility in fibroblasts. Phosphorylation does not seem to affect subcellular location.

Its subcellular location is the cytoplasm. It localises to the cytoskeleton. The protein localises to the stress fiber. Regulates leading edge dynamics and cell motility in fibroblasts. May be involved in cytokinesis and signal transduction. In Rattus norvegicus (Rat), this protein is Coronin-1B (Coro1b).